The following is a 298-amino-acid chain: Probable D,D-dipeptide transport system permease protein DdpC (298 aa).

Over 1-33 (MMLSEETSAVRPQKQTRFNGAKLVWMLKGSPLT) the chain is Cytoplasmic. A helical membrane pass occupies residues 34-54 (VTSAVIIVLMLLMMIFSPWLA). Topologically, residues 55-96 (THDPNAIDLTARLLPPSAAHWFGTDEVGRDLFSRVLVGSQQS) are periplasmic. The helical transmembrane segment at 97 to 117 (ILAGLVVVAIAGMIGSLLGCL) threads the bilayer. In terms of domain architecture, ABC transmembrane type-1 spans 97-282 (ILAGLVVVAI…LTAVGFNLFG (186 aa)). At 118–124 (SGVLGGR) the chain is on the cytoplasmic side. 2 helical membrane passes run 125–145 (ADAI…LVLT) and 146–166 (MALA…IAIV). Over 167 to 217 (RIPFYVRLARGQALVVRQYTYVQAAKTFGASRWHLINWHILRNSLPPLIVQ) the chain is Cytoplasmic. The helical transmembrane segment at 218 to 238 (ASLDIGSAILMAATLGFIGLG) threads the bilayer. Residues 239–260 (AQQPSAEWGAMVANGRNYVLDQ) are Periplasmic-facing. A helical membrane pass occupies residues 261–281 (WWYCAFPGAAILLTAVGFNLF). The Cytoplasmic portion of the chain corresponds to 282–298 (GDGIRDLLDPKAGGKQS).

This sequence belongs to the binding-protein-dependent transport system permease family. OppBC subfamily. The complex is composed of two ATP-binding proteins (DdpD and DdpF), two transmembrane proteins (DdpB and DdpC) and a solute-binding protein (DdpA).

It is found in the cell inner membrane. Its function is as follows. Part of the ABC transporter complex DdpABCDF, which is probably involved in D,D-dipeptide transport. Probably responsible for the translocation of the substrate across the membrane. The protein is Probable D,D-dipeptide transport system permease protein DdpC (ddpC) of Escherichia coli (strain K12).